Reading from the N-terminus, the 119-residue chain is Ribosome-binding factor A (119 aa).

It belongs to the RbfA family. Monomer. Binds 30S ribosomal subunits, but not 50S ribosomal subunits or 70S ribosomes.

It localises to the cytoplasm. In terms of biological role, one of several proteins that assist in the late maturation steps of the functional core of the 30S ribosomal subunit. Associates with free 30S ribosomal subunits (but not with 30S subunits that are part of 70S ribosomes or polysomes). Required for efficient processing of 16S rRNA. May interact with the 5'-terminal helix region of 16S rRNA. This Coxiella burnetii (strain CbuK_Q154) (Coxiella burnetii (strain Q154)) protein is Ribosome-binding factor A.